A 192-amino-acid chain; its full sequence is UPF0301 protein Rru_A3059 (192 aa).

The protein belongs to the UPF0301 (AlgH) family.

In Rhodospirillum rubrum (strain ATCC 11170 / ATH 1.1.1 / DSM 467 / LMG 4362 / NCIMB 8255 / S1), this protein is UPF0301 protein Rru_A3059.